The primary structure comprises 608 residues: ESX-3 secretion system protein EccA3 (608 aa).

Positions 284-303 are disordered; it reads EARSDPWDPETEPSEAEFVD. The segment covering 290–301 has biased composition (acidic residues); that stretch reads WDPETEPSEAEF. Position 365 to 372 (365 to 372) interacts with ATP; it reads GPPGTGKT.

This sequence belongs to the CbxX/CfxQ family. In terms of assembly, part of the ESX-3 / type VII secretion system (T7SS), which is composed of cytosolic and membrane components.

It is found in the cytoplasm. Its function is as follows. Part of the ESX-3 specialized secretion system, which is required for siderophore-mediated iron acquisition and for the secretion of EsxH and EsxG. EccA3 exhibits ATPase activity and may provide energy for the export of ESX-3 substrates. This is ESX-3 secretion system protein EccA3 from Mycolicibacterium smegmatis (strain ATCC 700084 / mc(2)155) (Mycobacterium smegmatis).